A 473-amino-acid chain; its full sequence is MTNDRLFAGIARVLSVRPLAAALALLLTLPLIGVQAQSLRPSSGLRLPTPAASAGAAAGSASGQRQADFIVAVVNSEPITNSEVRTKLVRTEQQIIQQGSPLPPRRELVPQVLERLISDKAQLQLARSAGMRVDDNAVEAAVQTVARQNQISVDELRRRLKADGIAYSQFESDLRDELLVSRLRQREVDLRVTVTEQDIDQFLREQEGGTELSSLALNLAQILVAVPENATPGQVAALQAKAQQVMDKARGGADFAALANEFSDSPTRGTGGLMGLREADRYPPLFVESTKSLKVGGLAGPIRSGAGFHILKVIEKRQAGMPGSVITQTHARHILLRLSPKQGETAATEKLAALRKRILAGQADFAALARENSEDASAKQGGDLGWANPGMFVPEFEKVMNGLAPNQISDPLVSRFGVHLIQVLERREAQMSQRDQREMARNVLRGKKQEEAYVLWAQEVRGRAYVEYRESPQ.

A signal peptide spans methionine 1–alanine 36. PpiC domains lie at serine 214 to glutamate 315 and isoleucine 326 to glutamate 425.

The protein localises to the periplasm. It carries out the reaction [protein]-peptidylproline (omega=180) = [protein]-peptidylproline (omega=0). Its function is as follows. Chaperone involved in the correct folding and assembly of outer membrane proteins. Recognizes specific patterns of aromatic residues and the orientation of their side chains, which are found more frequently in integral outer membrane proteins. May act in both early periplasmic and late outer membrane-associated steps of protein maturation. The sequence is that of Chaperone SurA from Polaromonas sp. (strain JS666 / ATCC BAA-500).